The following is a 353-amino-acid chain: DNA polymerase IV (353 aa).

In terms of domain architecture, UmuC spans 6-187 (IIHVDCDCFY…LPVSKLHGVG (182 aa)). The Mg(2+) site is built by D10 and D105. E106 is an active-site residue.

It belongs to the DNA polymerase type-Y family. As to quaternary structure, monomer. The cofactor is Mg(2+).

The protein resides in the cytoplasm. It catalyses the reaction DNA(n) + a 2'-deoxyribonucleoside 5'-triphosphate = DNA(n+1) + diphosphate. In terms of biological role, poorly processive, error-prone DNA polymerase involved in untargeted mutagenesis. Copies undamaged DNA at stalled replication forks, which arise in vivo from mismatched or misaligned primer ends. These misaligned primers can be extended by PolIV. Exhibits no 3'-5' exonuclease (proofreading) activity. May be involved in translesional synthesis, in conjunction with the beta clamp from PolIII. The protein is DNA polymerase IV of Pseudomonas fluorescens (strain Pf0-1).